We begin with the raw amino-acid sequence, 27 residues long: Defensin-like protein 1 (27 aa).

The residue at position 1 (Gln1) is a Pyrrolidone carboxylic acid.

The protein belongs to the DEFL family. As to quaternary structure, forms oligomers in its native state.

Functionally, possesses antifungal activity sensitive to inorganic cations. The polypeptide is Defensin-like protein 1 (Brassica campestris (Field mustard)).